We begin with the raw amino-acid sequence, 554 residues long: (E)-nerolidol synthase TPS18VF (554 aa).

Positions 276, 313, 317, 455, and 458 each coordinate (2E,6E)-farnesyl diphosphate. Positions 313 and 317 each coordinate Mg(2+). Residues D313–D317 carry the DDXXD motif motif. Mg(2+)-binding residues include D458, S462, and E466.

The protein belongs to the terpene synthase family. Tpsb subfamily. Requires Mg(2+) as cofactor. It depends on Mn(2+) as a cofactor. In terms of tissue distribution, highly expressed in glandular trichomes.

It carries out the reaction (2E,6E)-farnesyl diphosphate + H2O = (6E)-nerolidol + diphosphate. It catalyses the reaction (2E)-geranyl diphosphate + H2O = (S)-linalool + diphosphate. It participates in secondary metabolite biosynthesis; terpenoid biosynthesis. Involved in sesquiterpene olefins biosynthesis, constituants of cannabinoids and terpenoids-rich resins. Catalyzes primarily the conversion of (2E)-farnesyl diphosphate to (E)-nerolidol, and the conversion of (2E)-geranyl diphosphate to (+)linalool. This Cannabis sativa (Hemp) protein is (E)-nerolidol synthase TPS18VF.